The following is a 682-amino-acid chain: Methionine--tRNA ligase (682 aa).

The 'HIGH' region signature appears at 15–25 (PYANGAIHLGH). 4 residues coordinate Zn(2+): C146, C149, C159, and C162. The short motif at 331-335 (KMSKS) is the 'KMSKS' region element. Residue K334 participates in ATP binding. Positions 580–682 (DFAKLDMRVA…NGVTAGMQVK (103 aa)) constitute a tRNA-binding domain.

This sequence belongs to the class-I aminoacyl-tRNA synthetase family. MetG type 1 subfamily. Homodimer. Zn(2+) is required as a cofactor.

The protein resides in the cytoplasm. The enzyme catalyses tRNA(Met) + L-methionine + ATP = L-methionyl-tRNA(Met) + AMP + diphosphate. Is required not only for elongation of protein synthesis but also for the initiation of all mRNA translation through initiator tRNA(fMet) aminoacylation. The chain is Methionine--tRNA ligase from Haemophilus influenzae (strain PittGG).